We begin with the raw amino-acid sequence, 91 residues long: Sec-independent protein translocase protein TatA (91 aa).

The helical transmembrane segment at 2–22 (ANLGFPELVLIAVVILVLFGW) threads the bilayer. Positions 43-55 (VSEMKNDGAEAEK) are enriched in basic and acidic residues. Residues 43–91 (VSEMKNDGAEAEKTSAASTKTDEITSVSSTDTPQPTVTVESKDEKKHPA) form a disordered region. A compositionally biased stretch (polar residues) spans 57 to 81 (SAASTKTDEITSVSSTDTPQPTVTV). Over residues 82-91 (ESKDEKKHPA) the composition is skewed to basic and acidic residues.

This sequence belongs to the TatA/E family. As to quaternary structure, the Tat system comprises two distinct complexes: a TatABC complex, containing multiple copies of TatA, TatB and TatC subunits, and a separate TatA complex, containing only TatA subunits. Substrates initially bind to the TatABC complex, which probably triggers association of the separate TatA complex to form the active translocon.

The protein resides in the cell membrane. Its function is as follows. Part of the twin-arginine translocation (Tat) system that transports large folded proteins containing a characteristic twin-arginine motif in their signal peptide across membranes. TatA could form the protein-conducting channel of the Tat system. The chain is Sec-independent protein translocase protein TatA from Corynebacterium kroppenstedtii (strain DSM 44385 / JCM 11950 / CIP 105744 / CCUG 35717).